The primary structure comprises 241 residues: Thymidylate kinase (241 aa).

Residue 17 to 24 participates in ATP binding; it reads GGEGAGKT.

Belongs to the thymidylate kinase family.

The catalysed reaction is dTMP + ATP = dTDP + ADP. Its function is as follows. Phosphorylation of dTMP to form dTDP in both de novo and salvage pathways of dTTP synthesis. The chain is Thymidylate kinase from Thermosynechococcus vestitus (strain NIES-2133 / IAM M-273 / BP-1).